Reading from the N-terminus, the 270-residue chain is Phosphatidate cytidylyltransferase (270 aa).

The next 7 membrane-spanning stretches (helical) occupy residues 19–39 (LWLT…IGLA), 53–73 (TAFS…LLIL), 76–96 (GALL…VTQW), 101–121 (GWPA…SLLR), 126–146 (FGFT…IAAY), 183–203 (LVAS…ALLL), and 248–268 (ALLY…AIFF).

Belongs to the CDS family.

Its subcellular location is the cell inner membrane. It carries out the reaction a 1,2-diacyl-sn-glycero-3-phosphate + CTP + H(+) = a CDP-1,2-diacyl-sn-glycerol + diphosphate. The protein operates within phospholipid metabolism; CDP-diacylglycerol biosynthesis; CDP-diacylglycerol from sn-glycerol 3-phosphate: step 3/3. This Brucella suis biovar 1 (strain 1330) protein is Phosphatidate cytidylyltransferase (cdsA).